The primary structure comprises 331 residues: Phosphoenolpyruvate transferase (331 aa).

Asp63 contributes to the 7,8-didemethyl-8-hydroxy-5-deazariboflavin binding site.

It belongs to the CofD family. As to quaternary structure, homodimer. Mg(2+) is required as a cofactor.

The enzyme catalyses enolpyruvoyl-2-diphospho-5'-guanosine + 7,8-didemethyl-8-hydroxy-5-deazariboflavin = dehydro coenzyme F420-0 + GMP + H(+). Its pathway is cofactor biosynthesis; coenzyme F420 biosynthesis. Functionally, catalyzes the transfer of the phosphoenolpyruvate moiety from enoylpyruvoyl-2-diphospho-5'-guanosine (EPPG) to 7,8-didemethyl-8-hydroxy-5-deazariboflavin (FO) with the formation of dehydro coenzyme F420-0 and GMP. The protein is Phosphoenolpyruvate transferase of Mycobacterium sp. (strain KMS).